Reading from the N-terminus, the 285-residue chain is Putative hydrolase DDAH2 (285 aa).

His-171 (proton donor) is an active-site residue. Residue Cys-276 is the Nucleophile of the active site.

This sequence belongs to the DDAH family. In terms of processing, phosphorylated by TBK1. Phosphorylation inhibits the translocation into the mitochondrion upon Sendai viral infection.

The protein resides in the cytoplasm. It is found in the mitochondrion. Functionally, putative hydrolase with unknown substrate. Does not hydrolyze N(G),N(G)-dimethyl-L-arginine (ADMA) which acts as an inhibitor of NOS. In endothelial cells, induces expression of vascular endothelial growth factor (VEGF) via phosphorylation of the transcription factor SP1 by PKA in a process that is independent of NO and NO synthase. Similarly, enhances pancreatic insulin secretion through SP1-mediated transcriptional up-regulation of secretagogin/SCGN, an insulin vesicle docking protein. Upon viral infection, relocates to mitochondria where it promotes mitochondrial fission through activation of DNM1L leading to the inhibition of innate response activation mediated by MAVS. The polypeptide is Putative hydrolase DDAH2 (DDAH2) (Bos taurus (Bovine)).